The primary structure comprises 534 residues: Unguisins hydrolase ungD' (534 aa).

The protein belongs to the peptidase S12 family.

The protein operates within secondary metabolite biosynthesis. Functionally, hydrolase; part of the gene cluster that mediates the biosynthesis of the unguisins, gamma-aminobutyric acid (GABA)-containing fungal cyclic heptapeptides with the amino acid sequence cyclo-(D-Ala1-D-Val2-L-Leu3-beta-MePhe4-D-Ala5-D-Trp6-GABA7) for unguisin H and cyclo-(D-Ala1-D-Ala2-L-Leu3-beta-MePhe4-D-Ala5-D-Trp6-GABA7) for unguisin I. Within the pathway, the hydrolase ungD' catalyzes the hydrolysis between the D-tryptophan and GABA residues of unguisins H and I to produce the corresponding linear peptides. The alanine racemase ungC' catalyzes the interconversion of L-alanine and D-alanine, providing the D-alanine which is accepted by the first adenylation domain of the nonribosomal peptide synthetase (NRPS) ungA', whereas the methyltransferase ungE' provides the (2R,3R)-beta-methylphenylalanine residue incorporated by the module 4. UngA' is the main enzyme within the cluster which condenses the 7 residues using its respective 7 modules. The terminal condensation domain (Ct) is involved in cyclization with D-alanine and thereby releasing of unguisins H and I. This Aspergillus campestris (strain IBT 28561) protein is Unguisins hydrolase ungD'.